Reading from the N-terminus, the 347-residue chain is NADH-ubiquinone oxidoreductase chain 2 (347 aa).

Helical transmembrane passes span 1-21, 25-45, 68-88, 96-116, 122-142, 145-165, 178-198, 201-221, 239-259, 274-294, and 326-346; these read MNPM…SIVL, HWFL…PVLM, MILV…TIMI, MLIT…FWVP, VSLS…LSLL, IFPS…IMIG, IMAY…IYNP, SLLN…LLII, IVVS…PLTG, SSVM…FFYM, and MMSL…LITL.

This sequence belongs to the complex I subunit 2 family. Core subunit of respiratory chain NADH dehydrogenase (Complex I) which is composed of 45 different subunits. Interacts with TMEM242.

It localises to the mitochondrion inner membrane. It carries out the reaction a ubiquinone + NADH + 5 H(+)(in) = a ubiquinol + NAD(+) + 4 H(+)(out). In terms of biological role, core subunit of the mitochondrial membrane respiratory chain NADH dehydrogenase (Complex I) which catalyzes electron transfer from NADH through the respiratory chain, using ubiquinone as an electron acceptor. Essential for the catalytic activity and assembly of complex I. The chain is NADH-ubiquinone oxidoreductase chain 2 from Sylvisorex lunaris (Moon forest shrew).